The primary structure comprises 453 residues: Tetrahydroanabasine acetyltransferase (453 aa).

Residues His163 and Asp388 each act as proton acceptor in the active site.

This sequence belongs to the plant acyltransferase family. As to quaternary structure, monomer.

The enzyme catalyses tetrahydroanabasine + acetyl-CoA = ammodendrine + CoA. It participates in alkaloid biosynthesis. In terms of biological role, tetrahydroanabasine acetyltransferase involved in the accumulation of quinolizidine type antinutritional alkaloids (QAs). QAs impart a bitter taste to plants, acting as repellents and toxicants for herbivores and predators, and possess a variety of pharmacological effects, including sedative, anticonvulsant, anti-inflammatory, antiviral, antitumor, antipyretic, anti-hepatitis B, antifibrotic, antiallergic, antidiarrheal, analgesic and antimicrobial activities. Mediates the conversion of tetrahydroanabasine into ammodendrine. In Lupinus angustifolius (Narrow-leaved blue lupine), this protein is Tetrahydroanabasine acetyltransferase.